The sequence spans 159 residues: Ribosomal RNA large subunit methyltransferase H (159 aa).

S-adenosyl-L-methionine-binding positions include L76, G108, and 127-132; that span reads FSKMTF.

The protein belongs to the RNA methyltransferase RlmH family. In terms of assembly, homodimer.

Its subcellular location is the cytoplasm. The enzyme catalyses pseudouridine(1915) in 23S rRNA + S-adenosyl-L-methionine = N(3)-methylpseudouridine(1915) in 23S rRNA + S-adenosyl-L-homocysteine + H(+). Functionally, specifically methylates the pseudouridine at position 1915 (m3Psi1915) in 23S rRNA. This chain is Ribosomal RNA large subunit methyltransferase H, found in Bifidobacterium longum subsp. infantis (strain ATCC 15697 / DSM 20088 / JCM 1222 / NCTC 11817 / S12).